The primary structure comprises 419 residues: Ras association domain-containing protein 8 (419 aa).

The Ras-associating domain occupies 1–82 (MELKVWVDGV…VQLILRRTGP (82 aa)). Phosphoserine occurs at positions 105 and 129. A Phosphothreonine modification is found at Thr131. Residues 372–399 (ASQADIETEAPFQSGSLKRPGSSRQLPS) form a disordered region. Polar residues predominate over residues 382-399 (PFQSGSLKRPGSSRQLPS). At Ser387 the chain carries Phosphoserine.

The chain is Ras association domain-containing protein 8 (Rassf8) from Mus musculus (Mouse).